The primary structure comprises 207 residues: Ras-related protein rab7 (207 aa).

Residues 15 to 22 (GDSGVGKT), 34 to 40 (SNQYKAT), 63 to 67 (DTAGQ), 125 to 128 (NKID), and 156 to 157 (AK) contribute to the GTP site. An Effector region motif is present at residues 37–45 (YKATIGADF). S-geranylgeranyl cysteine attachment occurs at residues C205 and C207. C207 bears the Cysteine methyl ester mark.

This sequence belongs to the small GTPase superfamily. Rab family. In terms of assembly, (Microbial infection) Interacts with Singapore grouper iridoviral proteins VP69 (ORF69) and VP101 (ORF101). Ubiquitously expressed. Expressed in liver, spleen, kidney, brain, intestine, heart, skin, muscle, gill and stomach.

Its subcellular location is the late endosome membrane. The protein localises to the lysosome membrane. Its function is as follows. Key regulator in endo-lysosomal trafficking. Governs early-to-late endosomal maturation, microtubule minus-end as well as plus-end directed endosomal migration and positioning, and endosome-lysosome transport through different protein-protein interaction cascades. Plays important roles in microbial pathogen infection and survival, as well as in participating in the life cycle of viruses. In Epinephelus coioides (Orange-spotted grouper), this protein is Ras-related protein rab7.